The chain runs to 372 residues: tRNA pseudouridine synthase D (372 aa).

D85 acts as the Nucleophile in catalysis. The 171-residue stretch at 160-330 (GFTNYFGYQR…MQGSRRFMWG (171 aa)) folds into the TRUD domain.

It belongs to the pseudouridine synthase TruD family.

The enzyme catalyses uridine(13) in tRNA = pseudouridine(13) in tRNA. Functionally, responsible for synthesis of pseudouridine from uracil-13 in transfer RNAs. In Campylobacter jejuni subsp. jejuni serotype O:23/36 (strain 81-176), this protein is tRNA pseudouridine synthase D.